Here is a 77-residue protein sequence, read N- to C-terminus: Sec-independent protein translocase protein TatA (77 aa).

A helical transmembrane segment spans residues 1–21; it reads MGSFSIWHWLIVLVIVMLVFG. A disordered region spans residues 46–77; that stretch reads GEGKAAADPAQSKELRDSTTIDVEAKEKTRQQ.

It belongs to the TatA/E family. In terms of assembly, the Tat system comprises two distinct complexes: a TatABC complex, containing multiple copies of TatA, TatB and TatC subunits, and a separate TatA complex, containing only TatA subunits. Substrates initially bind to the TatABC complex, which probably triggers association of the separate TatA complex to form the active translocon.

The protein localises to the cell inner membrane. In terms of biological role, part of the twin-arginine translocation (Tat) system that transports large folded proteins containing a characteristic twin-arginine motif in their signal peptide across membranes. TatA could form the protein-conducting channel of the Tat system. The chain is Sec-independent protein translocase protein TatA from Cupriavidus necator (strain ATCC 17699 / DSM 428 / KCTC 22496 / NCIMB 10442 / H16 / Stanier 337) (Ralstonia eutropha).